Here is a 176-residue protein sequence, read N- to C-terminus: Nicotinamide-nucleotide adenylyltransferase (176 aa).

It belongs to the archaeal NMN adenylyltransferase family.

Its subcellular location is the cytoplasm. The enzyme catalyses beta-nicotinamide D-ribonucleotide + ATP + H(+) = diphosphate + NAD(+). It functions in the pathway cofactor biosynthesis; NAD(+) biosynthesis; NAD(+) from nicotinamide D-ribonucleotide: step 1/1. This Halorubrum lacusprofundi (strain ATCC 49239 / DSM 5036 / JCM 8891 / ACAM 34) protein is Nicotinamide-nucleotide adenylyltransferase.